A 171-amino-acid polypeptide reads, in one-letter code: Putative ankyrin repeat protein PA3287 (171 aa).

ANK repeat units follow at residues 48-77, 81-110, and 114-143; these read KGDS…DPDL, AGQT…DVEG, and DGKT…RRDA.

The protein is Putative ankyrin repeat protein PA3287 of Pseudomonas aeruginosa (strain ATCC 15692 / DSM 22644 / CIP 104116 / JCM 14847 / LMG 12228 / 1C / PRS 101 / PAO1).